The sequence spans 656 residues: Protein terminal ear1 (656 aa).

Residues 211–283 (SLVVLSPLPG…RRLVVEFTRP (73 aa)) form the RRM domain. 2 disordered regions span residues 280-408 (FTRP…WKGR) and 576-656 (LTDP…GYDD). The segment covering 288-299 (PRRRGYAPHQHR) has biased composition (basic residues). Residues 314–331 (PSQPTSSQPPASSSSSGS) show a composition bias toward low complexity. Residues 346-358 (CKSSAGSDQSSKG) are compositionally biased toward polar residues. Composition is skewed to low complexity over residues 377-397 (AAAA…QKGV), 585-601 (RSPA…SRAA), and 612-630 (PAPS…STHA). Basic and acidic residues predominate over residues 642-656 (DIRLAGELRRLGYDD).

As to expression, expressed below the shoot tip down the flanks of shoot apex in an alternating pattern. Not expressed in root tips, leaves or immature ears (female inflorescences).

In terms of biological role, probable RNA-binding protein. Involved in the regulation of leaf initiation rate and shoot development. Seems to act more predominantly in the early stages of the leaf development, rather than in the later phase. In Zea mays (Maize), this protein is Protein terminal ear1 (TE1).